A 67-amino-acid polypeptide reads, in one-letter code: Large ribosomal subunit protein bL35 (67 aa).

This sequence belongs to the bacterial ribosomal protein bL35 family.

In Novosphingobium aromaticivorans (strain ATCC 700278 / DSM 12444 / CCUG 56034 / CIP 105152 / NBRC 16084 / F199), this protein is Large ribosomal subunit protein bL35.